A 152-amino-acid polypeptide reads, in one-letter code: Interleukin-1 family member 10 (152 aa).

Belongs to the IL-1 family. Interacts with cargo receptor TMED10; the interaction mediates the translocation from the cytoplasm into the ERGIC (endoplasmic reticulum-Golgi intermediate compartment) and thereby secretion. In terms of tissue distribution, expressed in fetal skin, spleen and tonsil. Expressed mostly in the basal epithelia of skin and in proliferating B-cells of the tonsil.

It localises to the cytoplasm. Its subcellular location is the secreted. Functionally, cytokine with immunomodulatory activity. Alone, does not induce cytokine production, but reduces IL22 and IL17A production by T-cells in response to heat-killed Candida albicans. Reduces IL36G-induced production of IL8 by peripheral blood mononuclear cells. Increases IL6 production by dendritic cells stimulated by bacterial lipopolysaccharides (LPS). Ligand for IL-36R/IL1RL2. This chain is Interleukin-1 family member 10, found in Homo sapiens (Human).